Here is a 189-residue protein sequence, read N- to C-terminus: Potassium-transporting ATPase KdpC subunit (189 aa).

Residues 10–30 (LTLVFCVFFSVCYILVLWIFA) traverse the membrane as a helical segment.

Belongs to the KdpC family. In terms of assembly, the system is composed of three essential subunits: KdpA, KdpB and KdpC.

It is found in the cell inner membrane. Part of the high-affinity ATP-driven potassium transport (or Kdp) system, which catalyzes the hydrolysis of ATP coupled with the electrogenic transport of potassium into the cytoplasm. This subunit acts as a catalytic chaperone that increases the ATP-binding affinity of the ATP-hydrolyzing subunit KdpB by the formation of a transient KdpB/KdpC/ATP ternary complex. This Phocaeicola vulgatus (strain ATCC 8482 / DSM 1447 / JCM 5826 / CCUG 4940 / NBRC 14291 / NCTC 11154) (Bacteroides vulgatus) protein is Potassium-transporting ATPase KdpC subunit.